The primary structure comprises 129 residues: Small ribosomal subunit protein uS8 (129 aa).

This sequence belongs to the universal ribosomal protein uS8 family. As to quaternary structure, part of the 30S ribosomal subunit.

Functionally, one of the primary rRNA binding proteins, it binds directly to 16S rRNA central domain where it helps coordinate assembly of the platform of the 30S subunit. This is Small ribosomal subunit protein uS8 from Thermoplasma volcanium (strain ATCC 51530 / DSM 4299 / JCM 9571 / NBRC 15438 / GSS1).